The primary structure comprises 1008 residues: Ubiquitin carboxyl-terminal hydrolase 16 (1008 aa).

The helical transmembrane segment at 7–27 (LGISSLVLVVSLVLPLIGLFV) threads the bilayer. Residues Cys-74, Cys-77, Cys-85, Cys-88, Cys-94, Cys-98, His-107, and Cys-111 each contribute to the Zn(2+) site. The segment at 74–111 (CPVCYCLATTRCSRCKAVRYCSGKCQIIHWRQGHKDEC) adopts an MYND-type zinc-finger fold. Disordered regions lie at residues 122-149 (DESD…GPEP), 159-178 (LSNR…DNKD), 187-233 (VSVA…LDAH), 275-309 (SVHK…DPSL), and 326-379 (SDSC…YISD). Positions 193–203 (SGSSFSGFSSS) are enriched in low complexity. Basic and acidic residues predominate over residues 222–233 (ESERSESLLDAH). A compositionally biased stretch (polar residues) spans 284-295 (GQNQSQSRSLHS). A compositionally biased stretch (low complexity) spans 340-351 (SSLHFSFGSGSS). Positions 542 to 847 (CGLINVGNSC…GAYMLFYARC (306 aa)) constitute a USP domain. The active-site Nucleophile is Cys-551. Catalysis depends on His-807, which acts as the Proton acceptor. Disordered stretches follow at residues 859–905 (KTEA…GNIQ) and 952–1008 (FIFG…GGER). Low complexity-rich tracts occupy residues 878–888 (STISRSVSTSS) and 965–992 (SETP…RSSP).

It belongs to the peptidase C19 family. As to quaternary structure, interacts with SHM1 and SHM4. Interacts with HIPP27. As to expression, expressed in flowers, siliques, rosette leaves, cauline leaves, stems and at a lower level in roots. In roots, expressed in the sieve elements.

The protein resides in the membrane. It catalyses the reaction Thiol-dependent hydrolysis of ester, thioester, amide, peptide and isopeptide bonds formed by the C-terminal Gly of ubiquitin (a 76-residue protein attached to proteins as an intracellular targeting signal).. In terms of biological role, recognizes and hydrolyzes the peptide bond at the C-terminal Gly of ubiquitin. Involved in the processing of poly-ubiquitin precursors as well as that of ubiquitinated proteins. Involved in salt tolerance by modulating sodium transport activity and repressing cell death at least partially through modulating SHM1 stability and activity. Involved in cadmium tolerance by interacting with HIPP27 and probably modulating its stability. The chain is Ubiquitin carboxyl-terminal hydrolase 16 (UBP16) from Arabidopsis thaliana (Mouse-ear cress).